Here is a 235-residue protein sequence, read N- to C-terminus: Small ribosomal subunit protein eS4 (235 aa).

The region spanning leucine 37–glutamate 100 is the S4 RNA-binding domain.

The protein belongs to the eukaryotic ribosomal protein eS4 family.

The polypeptide is Small ribosomal subunit protein eS4 (Methanosarcina acetivorans (strain ATCC 35395 / DSM 2834 / JCM 12185 / C2A)).